A 414-amino-acid polypeptide reads, in one-letter code: tRNA dimethylallyltransferase (414 aa).

Residue 33–40 participates in ATP binding; the sequence is APTASGKT. 35–40 provides a ligand contact to substrate; sequence TASGKT. Interaction with substrate tRNA stretches follow at residues 58–61, 182–186, and 266–271; these read DSAL, QRITR, and RCVGYR.

It belongs to the IPP transferase family. Monomer. It depends on Mg(2+) as a cofactor.

It catalyses the reaction adenosine(37) in tRNA + dimethylallyl diphosphate = N(6)-dimethylallyladenosine(37) in tRNA + diphosphate. Catalyzes the transfer of a dimethylallyl group onto the adenine at position 37 in tRNAs that read codons beginning with uridine, leading to the formation of N6-(dimethylallyl)adenosine (i(6)A). The protein is tRNA dimethylallyltransferase of Psychrobacter cryohalolentis (strain ATCC BAA-1226 / DSM 17306 / VKM B-2378 / K5).